We begin with the raw amino-acid sequence, 419 residues long: Acyl-[acyl-carrier-protein] hydrolase FATB1, chloroplastic (419 aa).

The transit peptide at 1–50 (MVAAAATSAFFPVPAPGTSPKPGKSGNWPSSLSPTFKPKSIPNGGFQVKA) directs the protein to the chloroplast. Positions 1-84 (MVAAAATSAF…DTSSSPPPRA (84 aa)) are disordered. Over residues 61–78 (SAVNLKSGSLNTQEDTSS) the composition is skewed to polar residues. Active-site residues include N315, H317, and C352. The tract at residues 390–419 (SRTEWRPKNAGTNGAISTSTAKTSNGNSVS) is disordered. The span at 399–419 (AGTNGAISTSTAKTSNGNSVS) shows a compositional bias: polar residues.

It belongs to the acyl-ACP thioesterase family.

It localises to the plastid. The protein localises to the chloroplast. The catalysed reaction is octanoyl-[ACP] + H2O = octanoate + holo-[ACP] + H(+). It carries out the reaction decanoyl-[ACP] + H2O = decanoate + holo-[ACP] + H(+). Plays an essential role in chain termination during de novo fatty acid synthesis. Possesses thioesterase activity for short chain acyl-ACPs. Substrate preference is 8:0 &gt; 10:0. The sequence is that of Acyl-[acyl-carrier-protein] hydrolase FATB1, chloroplastic from Cuphea viscosissima (Blue waxweed).